The chain runs to 655 residues: Sphingomyelin phosphodiesterase 3 (655 aa).

The Cytoplasmic segment spans residues 1-10; that stretch reads MVLYTTPFPN. The helical intramembrane region spans 11 to 31; that stretch reads SCLSALHAVSWALIFPCYWLV. Topologically, residues 32-64 are cytoplasmic; the sequence is DRLLASFIPTTYEKRQRADDPCCLQLFCTVLFT. S-palmitoyl cysteine attachment occurs at residues cysteine 53, cysteine 54, and cysteine 59. The segment at residues 65 to 85 is an intramembrane region (helical); it reads PVYLALLVAALPFAFLGFIFW. Residues 86–655 are Cytoplasmic-facing; that stretch reads SPLQSARRPY…LMVSAGEEEA (570 aa). Serine 178 carries the post-translational modification Phosphoserine. The segment at 209–318 is disordered; the sequence is VEYKGDGGRH…SGGSGEPGAN (110 aa). Basic and acidic residues-rich tracts occupy residues 211-221 and 246-255; these read YKGDGGRHPSD and GGEEGGRPQE. Position 289 is a phosphoserine (serine 289). Glutamate 362 is a Mg(2+) binding site. 2 S-palmitoyl cysteine lipidation sites follow: cysteine 395 and cysteine 396. Histidine 639 (proton acceptor) is an active-site residue.

Belongs to the neutral sphingomyelinase family. Mg(2+) serves as cofactor. In terms of processing, palmitoylated, palmitoylation-deficient proteins are targeted for lysosomal degradation. Predominantly expressed in brain (at protein level).

The protein localises to the golgi apparatus membrane. It localises to the cell membrane. The catalysed reaction is a sphingomyelin + H2O = phosphocholine + an N-acylsphing-4-enine + H(+). It catalyses the reaction N-(15Z-tetracosenoyl)sphing-4-enine-1-phosphocholine + H2O = N-(15Z-tetracosenoyl)-sphing-4-enine + phosphocholine + H(+). It carries out the reaction N-(tetracosanoyl)-sphing-4-enine-1-phosphocholine + H2O = N-tetracosanoyl-sphing-4-enine + phosphocholine + H(+). The enzyme catalyses N-(hexadecanoyl)-sphing-4-enine-1-phosphocholine + H2O = N-hexadecanoylsphing-4-enine + phosphocholine + H(+). The catalysed reaction is an N-(acyl)-sphingosylphosphocholine + H2O = an N-acyl-sphingoid base + phosphocholine + H(+). It catalyses the reaction 1-hexadecanoyl-sn-glycero-3-phosphocholine + H2O = 1-hexadecanoyl-sn-glycerol + phosphocholine + H(+). It carries out the reaction 1-O-octadecyl-sn-glycero-3-phosphocholine + H2O = 1-O-octadecyl-sn-glycerol + phosphocholine + H(+). The enzyme catalyses a sphingosylphosphocholine + H2O = a sphingoid base + phosphocholine + H(+). Its pathway is lipid metabolism; sphingolipid metabolism. Inhibited by nSMase inhibitor GW4869. Binding of anionic phospholipids (APLs) such as phosphatidylserine (PS) and phosphatidic acid (PA) increases enzymatic activity. Catalyzes the hydrolysis of sphingomyelin to form ceramide and phosphocholine. Ceramide mediates numerous cellular functions, such as apoptosis and growth arrest, and is capable of regulating these 2 cellular events independently. Also hydrolyzes sphingosylphosphocholine. Regulates the cell cycle by acting as a growth suppressor in confluent cells. Probably acts as a regulator of postnatal development and participates in bone and dentin mineralization. Binds to anionic phospholipids (APLs) such as phosphatidylserine (PS) and phosphatidic acid (PA) that modulate enzymatic activity and subcellular location. May be involved in IL-1-beta-induced JNK activation in hepatocytes. May act as a mediator in transcriptional regulation of NOS2/iNOS via the NF-kappa-B activation under inflammatory conditions. The chain is Sphingomyelin phosphodiesterase 3 from Mus musculus (Mouse).